The chain runs to 861 residues: Ataxin-7-like protein 1 (861 aa).

5 disordered regions span residues 1–31 (MTSERSRIPCLSAAAAEGTGKKQQEGRAMAT), 154–189 (GHHSASSTSKPFKTPKDNLLTSSSKQHTVFPAKGSR), 342–448 (KSRE…GADE), 606–673 (PIPA…LSGP), and 772–861 (FDKS…RTLP). The 68-residue stretch at 284-351 (RRLSEREFDP…KSREKEVKDK (68 aa)) folds into the SCA7 domain. Residues 342–354 (KSREKEVKDKEHL) show a composition bias toward basic and acidic residues. Polar residues predominate over residues 355-369 (LTSTREILPSQSGPA). Composition is skewed to low complexity over residues 372–381 (SLLGSSGSSG), 403–417 (SSANSISSSTSSNHS), and 606–616 (PIPAVIPSPSH). A compositionally biased stretch (basic residues) spans 617–627 (KPSKTKTSKSS). Positions 628 to 641 (KVKDLSTRSDESPS) are enriched in basic and acidic residues. Composition is skewed to low complexity over residues 648–671 (QSSTSSSSSSSSSSLQTSLSSPLS) and 783–794 (SSSSSKACKITK). Over residues 817 to 828 (VNSTSSRQVGKN) the composition is skewed to polar residues. Over residues 829–847 (SSLALSQSSPSSISSPGHS) the composition is skewed to low complexity.

In Homo sapiens (Human), this protein is Ataxin-7-like protein 1 (ATXN7L1).